A 137-amino-acid chain; its full sequence is Nucleoside diphosphate kinase (137 aa).

Residues K11, F59, R87, T93, R104, and N114 each contribute to the ATP site. H117 (pros-phosphohistidine intermediate) is an active-site residue.

The protein belongs to the NDK family. Homotetramer. Mg(2+) serves as cofactor.

It localises to the cytoplasm. The catalysed reaction is a 2'-deoxyribonucleoside 5'-diphosphate + ATP = a 2'-deoxyribonucleoside 5'-triphosphate + ADP. The enzyme catalyses a ribonucleoside 5'-diphosphate + ATP = a ribonucleoside 5'-triphosphate + ADP. Its function is as follows. Major role in the synthesis of nucleoside triphosphates other than ATP. The ATP gamma phosphate is transferred to the NDP beta phosphate via a ping-pong mechanism, using a phosphorylated active-site intermediate. The sequence is that of Nucleoside diphosphate kinase from Frankia casuarinae (strain DSM 45818 / CECT 9043 / HFP020203 / CcI3).